A 66-amino-acid polypeptide reads, in one-letter code: Large ribosomal subunit protein uL29 (66 aa).

This sequence belongs to the universal ribosomal protein uL29 family.

The chain is Large ribosomal subunit protein uL29 from Thermococcus sibiricus (strain DSM 12597 / MM 739).